We begin with the raw amino-acid sequence, 289 residues long: ATP synthase subunit a (289 aa).

Helical transmembrane passes span 43–63 (AFHL…VLIF), 104–124 (IAPL…VDLI), 160–180 (LSVF…GGFI), 193–213 (IFVQ…TLIA), 232–252 (VFIL…GLGV), and 259–279 (AVFH…LTIV).

It belongs to the ATPase A chain family. In terms of assembly, F-type ATPases have 2 components, CF(1) - the catalytic core - and CF(0) - the membrane proton channel. CF(1) has five subunits: alpha(3), beta(3), gamma(1), delta(1), epsilon(1). CF(0) has three main subunits: a(1), b(2) and c(9-12). The alpha and beta chains form an alternating ring which encloses part of the gamma chain. CF(1) is attached to CF(0) by a central stalk formed by the gamma and epsilon chains, while a peripheral stalk is formed by the delta and b chains.

The protein localises to the cell inner membrane. In terms of biological role, key component of the proton channel; it plays a direct role in the translocation of protons across the membrane. This is ATP synthase subunit a from Pseudomonas fluorescens (strain SBW25).